Consider the following 247-residue polypeptide: Mannose-P-dolichol utilization defect 1 protein (247 aa).

Alanine 2 carries the N-acetylalanine modification. 7 helical membrane passes run 37 to 57, 74 to 94, 100 to 120, 128 to 145, 151 to 171, 185 to 205, and 213 to 233; these read CLKI…SLLV, LSLQ…VYSI, FSSW…CFLV, VKGV…LVLL, LTVV…GRLL, LSAI…FTSI, and MAGT…QLLF. The region spanning 39 to 105 is the PQ-loop 1 domain; it reads KILLSKGLGL…NNFPFSSWGE (67 aa). The region spanning 159–216 is the PQ-loop 2 domain; that stretch reads ASNVPAVVVGRLLQAATNYHNGHTGQLSAITVFLLFGGSLARIFTSIQETGDPLMAGT.

Belongs to the MPDU1 (TC 2.A.43.3) family.

It localises to the membrane. Required for normal utilization of mannose-dolichol phosphate (Dol-P-Man) in the synthesis of N-linked and O-linked oligosaccharides and GPI anchors. In Homo sapiens (Human), this protein is Mannose-P-dolichol utilization defect 1 protein (MPDU1).